The sequence spans 328 residues: COP9 signalosome complex subunit 6 (328 aa).

The MPN domain occupies 42 to 175 (VALHPLVILN…VSVFESVIDI (134 aa)).

Belongs to the peptidase M67A family. CSN6 subfamily. Component of the CSN complex, composed of COPS1/GPS1, COPS2, COPS3, COPS4, COPS5, COPS6, COPS7 (COPS7A or COPS7B), COPS8 and COPS9. In the complex, it probably interacts directly with COPS2, COPS4, COPS5, COPS7 (COPS7A or COPS7B) and COPS9. Interacts with the translation initiation factor EIF3S6. Interacts weakly with RBX1. Directly interacts with COP1 and 14-3-3 protein sigma/SFN. Interacts with ERCC6.

Its subcellular location is the cytoplasm. It localises to the nucleus. Component of the COP9 signalosome complex (CSN), a complex involved in various cellular and developmental processes. The CSN complex is an essential regulator of the ubiquitin (Ubl) conjugation pathway by mediating the deneddylation of the cullin subunits of SCF-type E3 ligase complexes, leading to decrease the Ubl ligase activity of SCF-type complexes such as SCF, CSA or DDB2. The complex is also involved in phosphorylation of p53/TP53, c-jun/JUN, IkappaBalpha/NFKBIA, ITPK1 and IRF8, possibly via its association with CK2 and PKD kinases. CSN-dependent phosphorylation of TP53 and JUN promotes and protects degradation by the Ubl system, respectively. Has some glucocorticoid receptor-responsive activity. Stabilizes COP1 through reducing COP1 auto-ubiquitination and decelerating COP1 turnover rate, hence regulates the ubiquitination of COP1 targets, including SFN. In Pongo abelii (Sumatran orangutan), this protein is COP9 signalosome complex subunit 6 (COPS6).